The following is a 121-amino-acid chain: Small ribosomal subunit protein bS16 (121 aa).

Residues 97–114 (LAKAKTKDGDNDSSKAES) are compositionally biased toward basic and acidic residues. The interval 97 to 121 (LAKAKTKDGDNDSSKAESESNEAET) is disordered.

This sequence belongs to the bacterial ribosomal protein bS16 family.

In Prochlorococcus marinus (strain MIT 9301), this protein is Small ribosomal subunit protein bS16.